Here is a 314-residue protein sequence, read N- to C-terminus: Formimidoylglutamase (314 aa).

Residues H127, D153, H155, D157, D245, and D247 each contribute to the Mn(2+) site.

This sequence belongs to the arginase family. Mn(2+) is required as a cofactor.

It carries out the reaction N-formimidoyl-L-glutamate + H2O = formamide + L-glutamate. Its pathway is amino-acid degradation; L-histidine degradation into L-glutamate; L-glutamate from N-formimidoyl-L-glutamate (hydrolase route): step 1/1. Its function is as follows. Catalyzes the conversion of N-formimidoyl-L-glutamate to L-glutamate and formamide. The chain is Formimidoylglutamase from Aeromonas salmonicida (strain A449).